A 419-amino-acid chain; its full sequence is uncharacterized protein (419 aa).

It belongs to the MT-A70-like family.

The protein resides in the cytoplasm. This is an uncharacterized protein from Schizosaccharomyces pombe (strain 972 / ATCC 24843) (Fission yeast).